Reading from the N-terminus, the 250-residue chain is Probable transcriptional regulatory protein RC1_1808 (250 aa).

The segment at Met-1–Arg-21 is disordered.

The protein belongs to the TACO1 family.

It is found in the cytoplasm. The polypeptide is Probable transcriptional regulatory protein RC1_1808 (Rhodospirillum centenum (strain ATCC 51521 / SW)).